Here is a 485-residue protein sequence, read N- to C-terminus: GlcNAc-binding protein A (485 aa).

An N-terminal signal peptide occupies residues 1-29 (MKKQPQKTLLAIALSVVSGTAMSHGYVSA). One can recognise a Chitin-binding type-4 domain in the interval 30-200 (VENGVAEARV…SFYNVIDVKF (171 aa)). One can recognise a Chitin-binding type-3 domain in the interval 437–478 (ADTKVLASDGAIYQCKPFPYSGYCVQWTPTATQYQPGTGSHW).

Belongs to the GbpA family.

The protein localises to the secreted. In terms of biological role, probably interacts with GlcNAc residues. May promote attachment to both epithelial cell surfaces and chitin. This is GlcNAc-binding protein A from Vibrio vulnificus (strain CMCP6).